We begin with the raw amino-acid sequence, 781 residues long: Beta-mannosyltransferase 4 (781 aa).

Residues 1-17 (MTKSYMPLFRSPRQFKK) are Cytoplasmic-facing. A helical membrane pass occupies residues 18-38 (IYFILIPLILAVIILHVFFDG). Topologically, residues 39–781 (FNKISEYSPT…EKEDDDDIEV (743 aa)) are extracellular. A coiled-coil region spans residues 640–733 (KLGDSEAAIK…AKDEDKNEDE (94 aa)). Basic and acidic residues-rich tracts occupy residues 663–728 (KAEK…KDED) and 736–750 (KEKN…KSEV). The tract at residues 663-781 (KAEKEKAEKE…EKEDDDDIEV (119 aa)) is disordered. Acidic residues predominate over residues 751–781 (EENGENTNEGGEDDGDGDGEEEKEDDDDIEV).

This sequence belongs to the BMT family.

The protein localises to the membrane. Functionally, beta-mannosyltransferase involved in cell wall biosynthesis. Required for the elongation of beta-mannose chains on the acid-labile fraction of cell wall phosphopeptidomannan. In Candida albicans (strain SC5314 / ATCC MYA-2876) (Yeast), this protein is Beta-mannosyltransferase 4 (BMT4).